The sequence spans 1346 residues: Cytokinesis protein sepH (1346 aa).

A disordered region spans residues 1-50 (MVSRSNEGPEAPHPASRTPGAPAKGRLTRLGSSPSKRDDKAKDDRMGKTS). A compositionally biased stretch (basic and acidic residues) spans 35–50 (SKRDDKAKDDRMGKTS). Residues 60-310 (YQLGDCLGRG…ARKLLKHPWI (251 aa)) enclose the Protein kinase domain. ATP is bound by residues 66–74 (LGRGAFGSV) and Lys-89. Residue Asp-182 is the Proton acceptor of the active site. Disordered regions lie at residues 342–380 (RSPESNALRRGTRNENQNPPSLRLDTRHTPTKVTLPSPV), 446–497 (DESF…HMRR), and 1211–1295 (LCKL…AGAS). Composition is skewed to polar residues over residues 477-489 (QQANSGTSQSQNG) and 1220-1249 (RGSTSATSPGLLANQSAPVTPQLSRQNQSK).

It belongs to the protein kinase superfamily. Ser/Thr protein kinase family. CDC7 subfamily. Mg(2+) serves as cofactor.

The catalysed reaction is L-seryl-[protein] + ATP = O-phospho-L-seryl-[protein] + ADP + H(+). It catalyses the reaction L-threonyl-[protein] + ATP = O-phospho-L-threonyl-[protein] + ADP + H(+). In terms of biological role, required for early events during cytokinesis including localization of cytoskeletal components to the cytokinetic ring. This chain is Cytokinesis protein sepH, found in Emericella nidulans (strain FGSC A4 / ATCC 38163 / CBS 112.46 / NRRL 194 / M139) (Aspergillus nidulans).